The following is a 316-amino-acid chain: MTKEFHHVTVLLHETVDMLDIKPDGIYVDATLGGSGHSAYLLSKLGEEGHLYCFDQDQKAIDNAQVTLKSYIDKGQVTFIKDNFRHLKARLTALGVDEIDGILYDLGVSSPQLDERERGFSYKQDAPLDMRMDRQSLLTAYEVVNTYPFNDLVKIFFKYGEDKFSKQIARKIEQARAIKPIETTTELAELIKAAKPAKELKKKGHPAKQIFQAIRIEVNDELGAADESIQEAMELLALDGRISVITFHSLEDRLTKQLFKEASTVDVPKGLPLIPEDMKPKFELVSRKPILPSHSELAANKRAHSAKLRVAKKIRK.

Residues 35–37 (SGH), aspartate 55, phenylalanine 84, aspartate 105, and glutamine 112 contribute to the S-adenosyl-L-methionine site.

This sequence belongs to the methyltransferase superfamily. RsmH family.

Its subcellular location is the cytoplasm. It catalyses the reaction cytidine(1402) in 16S rRNA + S-adenosyl-L-methionine = N(4)-methylcytidine(1402) in 16S rRNA + S-adenosyl-L-homocysteine + H(+). Its function is as follows. Specifically methylates the N4 position of cytidine in position 1402 (C1402) of 16S rRNA. The sequence is that of Ribosomal RNA small subunit methyltransferase H from Streptococcus pyogenes serotype M6 (strain ATCC BAA-946 / MGAS10394).